The primary structure comprises 640 residues: Protein UL35 (640 aa).

Disordered regions lie at residues 353–373, 500–571, and 586–640; these read ERGEFGDEDEEQENDGEPREA, ASSS…PRQR, and AYSH…LRHL. Over residues 358–367 the composition is skewed to acidic residues; the sequence is GDEDEEQEND. Residues 500-562 are compositionally biased toward low complexity; the sequence is ASSSSASSSS…LSGSHGISSA (63 aa). Over residues 588–598 the composition is skewed to basic residues; it reads SHHRRHRRRRS. The span at 631–640 shows a compositional bias: basic and acidic residues; that stretch reads DDLAENLRHL.

The protein belongs to the herpesviridae pp85 family. Interacts with UL82. Interacts with isoform UL35A. Interacts with host UBP7; this interaction significantly inhibits the ability of USP7 to form nuclear bodies. Interacts with host DCAF1 (via C-terminus). Interacts with host SNX5; this interaction allows proper gB localization during viral assembly. Interacts with host TBK1; this interaction prevents type I interferon production. As to quaternary structure, interacts with UL82. Interacts with isoform UL35. Interacts with host UBP7; this interaction significantly inhibits the ability of USP7 to form nuclear bodies. Interacts with host SNX5; this interaction allows proper gB localization during viral assembly.

Its subcellular location is the virion tegument. It is found in the host nucleus. The protein resides in the host cytoplasm. Plays important role in immediate-early gene expression through interaction with UL82. Forms nuclear bodies in host nucleus, independently of PML. In turn, UL35 nuclear bodies associate with and remodel PML bodies. Through interaction with host DCAF1, causes cells to accumulate in the G2 phase of the cell cycle by inducing a DNA damage response. Regulates viral assembly by controlling the localization of the essential gB through regulation of a retrograde transport pathway. This modulation occurs via binding and inhibition of host sorting nexin 5/SNX5. Also plays a role in the inhibition of pattern recognition receptor-mediated type I interferon signaling at the level of TBK1. Its function is as follows. Promotes cytoplasmic UL82 accumulation and inhibits UL35-containing nuclear bodies formation. Regulates viral assembly by controlling the localization of the essential gB through regulation of a retrograde transport pathway. This modulation occurs via binding and inhibition of host sorting nexin 5/SNX5. In Homo sapiens (Human), this protein is Protein UL35 (UL35).